A 159-amino-acid polypeptide reads, in one-letter code: Transcription elongation factor GreA (159 aa).

Positions 46-73 form a coiled coil; the sequence is AEYHAAKEEQSFVEGRIKEIELKLSRMQ.

This sequence belongs to the GreA/GreB family.

In terms of biological role, necessary for efficient RNA polymerase transcription elongation past template-encoded arresting sites. The arresting sites in DNA have the property of trapping a certain fraction of elongating RNA polymerases that pass through, resulting in locked ternary complexes. Cleavage of the nascent transcript by cleavage factors such as GreA or GreB allows the resumption of elongation from the new 3'terminus. GreA releases sequences of 2 to 3 nucleotides. The sequence is that of Transcription elongation factor GreA from Vesicomyosocius okutanii subsp. Calyptogena okutanii (strain HA).